A 535-amino-acid chain; its full sequence is Bifunctional purine biosynthesis protein PurH (535 aa).

An MGS-like domain is found at 6–151; it reads TRLPVRRALI…KNHKDVAIVV (146 aa).

It belongs to the PurH family.

It carries out the reaction (6R)-10-formyltetrahydrofolate + 5-amino-1-(5-phospho-beta-D-ribosyl)imidazole-4-carboxamide = 5-formamido-1-(5-phospho-D-ribosyl)imidazole-4-carboxamide + (6S)-5,6,7,8-tetrahydrofolate. The catalysed reaction is IMP + H2O = 5-formamido-1-(5-phospho-D-ribosyl)imidazole-4-carboxamide. The protein operates within purine metabolism; IMP biosynthesis via de novo pathway; 5-formamido-1-(5-phospho-D-ribosyl)imidazole-4-carboxamide from 5-amino-1-(5-phospho-D-ribosyl)imidazole-4-carboxamide (10-formyl THF route): step 1/1. It functions in the pathway purine metabolism; IMP biosynthesis via de novo pathway; IMP from 5-formamido-1-(5-phospho-D-ribosyl)imidazole-4-carboxamide: step 1/1. The protein is Bifunctional purine biosynthesis protein PurH of Azotobacter vinelandii (strain DJ / ATCC BAA-1303).